A 393-amino-acid chain; its full sequence is Outer membrane protein assembly factor BamB (393 aa).

The N-terminal stretch at 1–19 (MQLRKTLLVGLVSVALLSG) is a signal peptide. Residue C20 is the site of N-palmitoyl cysteine attachment. Residue C20 is the site of S-diacylglycerol cysteine attachment.

This sequence belongs to the BamB family. As to quaternary structure, part of the Bam complex, which is composed of the outer membrane protein BamA, and four lipoproteins BamB, BamC, BamD and BamE.

The protein resides in the cell outer membrane. Its function is as follows. Part of the outer membrane protein assembly complex, which is involved in assembly and insertion of beta-barrel proteins into the outer membrane. The sequence is that of Outer membrane protein assembly factor BamB from Yersinia pestis.